Here is a 284-residue protein sequence, read N- to C-terminus: MIRIAIPNKGRLHEPTIQMFKEAGLPVLGGSNRKLFAKTNDPEITFLFARAADIPEYVQDGAADVGITGLDLISETESDVEMLLDLKYGGADLVLAVPEESDISSANDLDGMRVATEFPGITARYFKDLGIKIDVVKVSGACEMTPHVGIADAIVDISSSGTTLVMNHLKVIEKVFSSSIYLIANHETAKTEEKIEHIKTALESVMHAKAKRYLMMNAPITVVDDLKEVLPGLAGPTIMKVESKEDIVAVHAVVDADIIFATITKLKAAGAFDILVMPIERMIP.

This sequence belongs to the ATP phosphoribosyltransferase family. Long subfamily. Mg(2+) is required as a cofactor.

The protein resides in the cytoplasm. The catalysed reaction is 1-(5-phospho-beta-D-ribosyl)-ATP + diphosphate = 5-phospho-alpha-D-ribose 1-diphosphate + ATP. Its pathway is amino-acid biosynthesis; L-histidine biosynthesis; L-histidine from 5-phospho-alpha-D-ribose 1-diphosphate: step 1/9. Its activity is regulated as follows. Feedback inhibited by histidine. In terms of biological role, catalyzes the condensation of ATP and 5-phosphoribose 1-diphosphate to form N'-(5'-phosphoribosyl)-ATP (PR-ATP). Has a crucial role in the pathway because the rate of histidine biosynthesis seems to be controlled primarily by regulation of HisG enzymatic activity. The sequence is that of ATP phosphoribosyltransferase from Methanococcoides burtonii (strain DSM 6242 / NBRC 107633 / OCM 468 / ACE-M).